Here is a 563-residue protein sequence, read N- to C-terminus: Probable lysosomal cobalamin transporter (563 aa).

Transmembrane regions (helical) follow at residues 8-28 (LIWFAYLIVITVLIVVASVFI), 40-60 (FVTFMCVFSIAALLATVMLLP), 95-115 (VIYYSLYFLDALLCLVGIPFA), 144-164 (YTLAFIAVVIALVLVGFFAPM), and 188-208 (AFTFLLGFVTTIGSCLYVFYT). The N-linked (GlcNAc...) asparagine glycan is linked to asparagine 228. Helical transmembrane passes span 314 to 334 (GGFSLFLVGLSTWISLLMTVI), 374 to 394 (IIFALIVFLFFWGSVVGVVAV), 416 to 436 (MLLATAMLTLITLGLNYSVVM), and 506 to 526 (FGALLLWAHFLFLGIYLVILV). The segment at 537–563 (ERQLDEDAEEAEEESLLASTGRSGNPT) is disordered. The segment covering 539–551 (QLDEDAEEAEEES) has biased composition (acidic residues).

The protein belongs to the LIMR family. LMBRD1 subfamily.

Its subcellular location is the lysosome membrane. Functionally, probable lysosomal cobalamin transporter. Required to export cobalamin from lysosomes allowing its conversion to cofactors. The protein is Probable lysosomal cobalamin transporter of Neosartorya fischeri (strain ATCC 1020 / DSM 3700 / CBS 544.65 / FGSC A1164 / JCM 1740 / NRRL 181 / WB 181) (Aspergillus fischerianus).